Consider the following 135-residue polypeptide: Cytochrome c oxidase subunit 2 (135 aa).

His-81, Cys-116, Cys-120, and His-124 together coordinate Cu cation.

It belongs to the cytochrome c oxidase subunit 2 family.

It is found in the cell membrane. The catalysed reaction is 4 Fe(II)-[cytochrome c] + O2 + 8 H(+)(in) = 4 Fe(III)-[cytochrome c] + 2 H2O + 4 H(+)(out). In terms of biological role, subunits I and II form the functional core of the enzyme complex. Electrons originating in cytochrome c are transferred via heme a and Cu(A) to the binuclear center formed by heme a3 and Cu(B). The protein is Cytochrome c oxidase subunit 2 (cbaB) of Thermus thermophilus.